The primary structure comprises 448 residues: Lipoamide acyltransferase component of branched-chain alpha-keto acid dehydrogenase complex, mitochondrial (448 aa).

A Lipoyl-binding domain is found at 30 to 105; it reads VVQFKLSDIG…RVGQALIDVE (76 aa). Lys71 is subject to N6-lipoyllysine. 2 disordered regions span residues 108-146 and 191-211; these read GNVE…GKVL and TSGS…SKSY. Residues 121-136 are compositionally biased toward low complexity; it reads ASSSPEAPKSSAPKAP. Positions 146–183 constitute a Peripheral subunit-binding (PSBD) domain; the sequence is LATPAVRRIAIENKIKLAEVRGTGKDGRVLKEDVLKFL. Residues 191–210 are compositionally biased toward polar residues; it reads TSGSTNIRTTHQAPQPSSKS. CoA is bound by residues Arg257, Ser272, Asp315, Ser365, Asn366, Gly390, and Ile392. Residues His418 and Asp422 contribute to the active site.

This sequence belongs to the 2-oxoacid dehydrogenase family. (R)-lipoate is required as a cofactor. In terms of tissue distribution, ubiquitously expressed.

Its subcellular location is the mitochondrion matrix. The protein resides in the cytoplasm. The protein localises to the cytosol. It is found in the cell projection. It localises to the dendrite. Its subcellular location is the cilium. The catalysed reaction is N(6)-[(R)-dihydrolipoyl]-L-lysyl-[protein] + 2-methylpropanoyl-CoA = N(6)-[(R)-S(8)-2-methylpropanoyldihydrolipoyl]-L-lysyl-[protein] + CoA. The branched-chain alpha-keto dehydrogenase complex catalyzes the overall conversion of alpha-keto acids to acyl-CoA and CO(2). It contains multiple copies of three enzymatic components: branched-chain alpha-keto acid decarboxylase (E1), lipoamide acyltransferase (E2) and lipoamide dehydrogenase (E3). Within this complex, the catalytic function of this enzyme is to accept, and to transfer to coenzyme A, acyl groups that are generated by the branched-chain alpha-keto acid decarboxylase component. Required for the catabolism of branched-chain amino acids and the subsequent synthesis of monomethyl branched-chain fatty acids, which are important for regulating postembryonic growth. The chain is Lipoamide acyltransferase component of branched-chain alpha-keto acid dehydrogenase complex, mitochondrial from Caenorhabditis elegans.